The primary structure comprises 120 residues: Small ribosomal subunit protein bS6 (120 aa).

Residues 93 to 120 (KKADTAPSSMMKTVEREEARKASQTEQA) form a disordered region. Basic and acidic residues predominate over residues 105–120 (TVEREEARKASQTEQA).

It belongs to the bacterial ribosomal protein bS6 family.

Functionally, binds together with bS18 to 16S ribosomal RNA. In Delftia acidovorans (strain DSM 14801 / SPH-1), this protein is Small ribosomal subunit protein bS6.